The primary structure comprises 156 residues: Ribosomal RNA large subunit methyltransferase H (156 aa).

Residues Leu-73, Gly-104, and 123–128 (LSALTL) contribute to the S-adenosyl-L-methionine site.

Belongs to the RNA methyltransferase RlmH family. Homodimer.

The protein resides in the cytoplasm. It catalyses the reaction pseudouridine(1915) in 23S rRNA + S-adenosyl-L-methionine = N(3)-methylpseudouridine(1915) in 23S rRNA + S-adenosyl-L-homocysteine + H(+). Specifically methylates the pseudouridine at position 1915 (m3Psi1915) in 23S rRNA. This is Ribosomal RNA large subunit methyltransferase H from Psychromonas ingrahamii (strain DSM 17664 / CCUG 51855 / 37).